The chain runs to 147 residues: Cyanate hydratase (147 aa).

Residues R88, E91, and S114 contribute to the active site.

The protein belongs to the cyanase family.

The enzyme catalyses cyanate + hydrogencarbonate + 3 H(+) = NH4(+) + 2 CO2. Catalyzes the reaction of cyanate with bicarbonate to produce ammonia and carbon dioxide. This is Cyanate hydratase from Prochlorococcus marinus subsp. pastoris (strain CCMP1986 / NIES-2087 / MED4).